The chain runs to 192 residues: Calcium-binding protein K (192 aa).

2 consecutive EF-hand domains span residues 60 to 95 (WDEA…MAKA) and 96 to 131 (PTLD…VVCC). Ca(2+) contacts are provided by aspartate 73, aspartate 75, asparagine 77, glutamate 84, aspartate 109, aspartate 111, serine 113, tyrosine 115, and glutamate 120.

Belongs to the recoverin family.

The polypeptide is Calcium-binding protein K (cbpK) (Dictyostelium discoideum (Social amoeba)).